A 98-amino-acid chain; its full sequence is Large ribosomal subunit protein uL23 (98 aa).

It belongs to the universal ribosomal protein uL23 family. As to quaternary structure, part of the 50S ribosomal subunit. Contacts protein L29, and trigger factor when it is bound to the ribosome.

Its function is as follows. One of the early assembly proteins it binds 23S rRNA. One of the proteins that surrounds the polypeptide exit tunnel on the outside of the ribosome. Forms the main docking site for trigger factor binding to the ribosome. The protein is Large ribosomal subunit protein uL23 of Methylobacterium nodulans (strain LMG 21967 / CNCM I-2342 / ORS 2060).